The chain runs to 267 residues: MAAPPASSSAREEFVYLAKLAEQAERYEEMVEFMEKVAEAVDKDELTVEERNLLSVAYKNVIGARRASWRIISSIEQKEESRGNDDHVTTIRDYRSKIESELSKICDGILKLLDTRLVPASANGDSKVFYLKMKGDYHRYLAEFKTGQERKDAAEHTLTAYKAAQDIANAELAPTHPIRLGLALNFSVFYYEILNSPDRACNLAKQAFDEAIAELDTLGEESYKDSTLIMQLLRDNLTLWTSDMQDESPEEIKEAAAPKPAEEQKEI.

Residue alanine 2 is modified to N-acetylalanine. Residues serine 73 and serine 196 each carry the phosphoserine modification. A Phosphothreonine modification is found at threonine 217. A disordered region spans residues 244-267; it reads MQDESPEEIKEAAAPKPAEEQKEI. Serine 248 bears the Phosphoserine mark. A compositionally biased stretch (basic and acidic residues) spans 250 to 267; that stretch reads EEIKEAAAPKPAEEQKEI.

It belongs to the 14-3-3 family. Interacts with FD. Interacts with CINV1.

Its subcellular location is the nucleus. The protein localises to the cytoplasm. Functionally, is associated with a DNA binding complex that binds to the G box, a well-characterized cis-acting DNA regulatory element found in plant genes. The sequence is that of 14-3-3-like protein GF14 phi (GRF4) from Arabidopsis thaliana (Mouse-ear cress).